The chain runs to 139 residues: Ubiquitin-conjugating enzyme spm2 (139 aa).

In terms of domain architecture, UBC core spans Pro5–Phe139.

This sequence belongs to the ubiquitin-conjugating enzyme family. In terms of assembly, heterodimer with ubc13.

Functionally, has a role in the DNA error-free postreplication repair (PRR) pathway. Lacks catalytic activity by itself. The ubc13/spm2 heterodimer catalyzes the synthesis of non-canonical poly-ubiquitin chains that are linked through 'Lys-63'. The polypeptide is Ubiquitin-conjugating enzyme spm2 (spm2) (Schizosaccharomyces pombe (strain 972 / ATCC 24843) (Fission yeast)).